The sequence spans 142 residues: Hemoglobin subunit alpha-1 (142 aa).

The Globin domain maps to 2-142 (LLSADDKKHI…VSSVLTSKYR (141 aa)). His-59 contributes to the O2 binding site. His-88 contributes to the heme b binding site.

Belongs to the globin family. Heterotetramer of two alpha chains and two beta chains. In terms of tissue distribution, red blood cells.

Its function is as follows. Involved in oxygen transport from the lung to the various peripheral tissues. In Xenopus borealis (Kenyan clawed frog), this protein is Hemoglobin subunit alpha-1 (hba1).